We begin with the raw amino-acid sequence, 321 residues long: Phospho-N-acetylmuramoyl-pentapeptide-transferase (321 aa).

A run of 10 helical transmembrane segments spans residues 6–26, 53–73, 77–97, 121–141, 144–164, 175–195, 200–220, 226–246, 251–271, and 301–321; these read MLIP…LFIG, TMGG…VGIW, LTLS…LGFY, ILGA…HTLW, IIGN…WLVG, LDGL…IIAA, TDVL…LMFN, IFMG…VAIL, WSLL…ILQV, and IDLT…AFFL.

The protein belongs to the glycosyltransferase 4 family. MraY subfamily. Mg(2+) is required as a cofactor.

Its subcellular location is the cell membrane. It catalyses the reaction UDP-N-acetyl-alpha-D-muramoyl-L-alanyl-gamma-D-glutamyl-L-lysyl-D-alanyl-D-alanine + di-trans,octa-cis-undecaprenyl phosphate = Mur2Ac(oyl-L-Ala-gamma-D-Glu-L-Lys-D-Ala-D-Ala)-di-trans,octa-cis-undecaprenyl diphosphate + UMP. The protein operates within cell wall biogenesis; peptidoglycan biosynthesis. In terms of biological role, catalyzes the initial step of the lipid cycle reactions in the biosynthesis of the cell wall peptidoglycan: transfers peptidoglycan precursor phospho-MurNAc-pentapeptide from UDP-MurNAc-pentapeptide onto the lipid carrier undecaprenyl phosphate, yielding undecaprenyl-pyrophosphoryl-MurNAc-pentapeptide, known as lipid I. In Lacticaseibacillus paracasei (strain ATCC 334 / BCRC 17002 / CCUG 31169 / CIP 107868 / KCTC 3260 / NRRL B-441) (Lactobacillus paracasei), this protein is Phospho-N-acetylmuramoyl-pentapeptide-transferase.